We begin with the raw amino-acid sequence, 121 residues long: Large ribosomal subunit protein bL12 (121 aa).

Belongs to the bacterial ribosomal protein bL12 family. In terms of assembly, homodimer. Part of the ribosomal stalk of the 50S ribosomal subunit. Forms a multimeric L10(L12)X complex, where L10 forms an elongated spine to which 2 to 4 L12 dimers bind in a sequential fashion. Binds GTP-bound translation factors.

Functionally, forms part of the ribosomal stalk which helps the ribosome interact with GTP-bound translation factors. Is thus essential for accurate translation. The protein is Large ribosomal subunit protein bL12 of Ureaplasma parvum serovar 3 (strain ATCC 27815 / 27 / NCTC 11736).